We begin with the raw amino-acid sequence, 312 residues long: Putative endonuclease 4 (312 aa).

Zn(2+) contacts are provided by His84, His127, Glu166, Asp202, His205, His239, Asp252, His254, and Glu284.

This sequence belongs to the AP endonuclease 2 family. Zn(2+) serves as cofactor.

It carries out the reaction Endonucleolytic cleavage to 5'-phosphooligonucleotide end-products.. In terms of biological role, endonuclease IV plays a role in DNA repair. It cleaves phosphodiester bonds at apurinic or apyrimidinic sites (AP sites) to produce new 5'-ends that are base-free deoxyribose 5-phosphate residues. The chain is Putative endonuclease 4 from Acanthamoeba polyphaga (Amoeba).